Consider the following 914-residue polypeptide: NADH-quinone oxidoreductase subunit G (914 aa).

In terms of domain architecture, 2Fe-2S ferredoxin-type spans 1–83 (MATIHVDGKE…GTFISIDDSE (83 aa)). Residues C34, C45, C48, and C67 each contribute to the [2Fe-2S] cluster site. Positions 83 to 122 (EAKAFRESVVEWLMTNHPHDCPVCEEGGNCHLQDMTVMTG) constitute a 4Fe-4S His(Cys)3-ligated-type domain. H99, C103, C106, C112, C151, C154, C157, C201, C228, C231, C235, and C263 together coordinate [4Fe-4S] cluster. In terms of domain architecture, 4Fe-4S Mo/W bis-MGD-type spans 221–277 (MQFAPSICQQCSVGCNTSPGERYGELRRIENRYNGSVNHYFMCDRGRFGYGYVNLKD).

This sequence belongs to the complex I 75 kDa subunit family. Composed of 13 different subunits. Subunits NuoCD, E, F, and G constitute the peripheral sector of the complex. It depends on [2Fe-2S] cluster as a cofactor. [4Fe-4S] cluster serves as cofactor.

It catalyses the reaction a quinone + NADH + 5 H(+)(in) = a quinol + NAD(+) + 4 H(+)(out). NDH-1 shuttles electrons from NADH, via FMN and iron-sulfur (Fe-S) centers, to quinones in the respiratory chain. The immediate electron acceptor for the enzyme in this species is believed to be ubiquinone. Couples the redox reaction to proton translocation (for every two electrons transferred, four hydrogen ions are translocated across the cytoplasmic membrane), and thus conserves the redox energy in a proton gradient. The chain is NADH-quinone oxidoreductase subunit G (nuoG) from Yersinia pestis.